The sequence spans 513 residues: GMP synthase [glutamine-hydrolyzing] (513 aa).

In terms of domain architecture, Glutamine amidotransferase type-1 spans Lys-8–Asn-198. Cys-85 functions as the Nucleophile in the catalytic mechanism. Residues His-172 and Glu-174 contribute to the active site. A GMPS ATP-PPase domain is found at Trp-199–Arg-388. Ser-226 to Ser-232 provides a ligand contact to ATP.

In terms of assembly, homodimer.

The enzyme catalyses XMP + L-glutamine + ATP + H2O = GMP + L-glutamate + AMP + diphosphate + 2 H(+). The protein operates within purine metabolism; GMP biosynthesis; GMP from XMP (L-Gln route): step 1/1. Functionally, catalyzes the synthesis of GMP from XMP. In Lactococcus lactis subsp. cremoris (strain MG1363), this protein is GMP synthase [glutamine-hydrolyzing] (guaA).